Consider the following 21-residue polypeptide: Tricyclic peptide RP 71955 (21 aa).

The segment at residues 1–9 is a cross-link (3-cysteinyl-aspartic acid (Cys-Asp)); the sequence is CLGIGSCND. 2 cysteine pairs are disulfide-bonded: C1-C13 and C7-C19.

Its function is as follows. Active against HIV-1 virus in vitro. The chain is Tricyclic peptide RP 71955 from Streptomyces sp. (strain SP9440).